We begin with the raw amino-acid sequence, 160 residues long: CST complex subunit STN1 (160 aa).

A DNA-binding region (OB) is located at residues 41-133 (VEIVGTIVSR…QITANVAVAE (93 aa)).

Belongs to the STN1 family. In terms of assembly, component of the CST complex, composed of CTC1, TEN1 and STN1. Interacts with CTC1. Interacts with TEN1. Interacts with POT1A. In vitro interaction with TEN1 and POT1A is mutually exclusive, indicating that POT1A and TEN1 may compete for the same binding site. Widely expressed.

Its subcellular location is the nucleus. It is found in the chromosome. The protein localises to the telomere. In terms of biological role, component of the CST complex, a complex that binds to single-stranded DNA and is required to protect telomeres from DNA degradation. The CST complex binds single-stranded DNA with high affinity in a sequence-independent manner, while isolated subunits bind DNA with low affinity by themselves. Associates with enzymatically active telomerase. Plays a genomewide role in DNA replication and facilitates re-replication at non-telomeric loci. The protein is CST complex subunit STN1 of Arabidopsis thaliana (Mouse-ear cress).